Here is a 186-residue protein sequence, read N- to C-terminus: MAALDAIREALPEPARDIKLNLQAVLQPGPLTPAQRWGVAVATAAAARNERLLAAILADARAEVEPAVVEDALAAAAVMAMNNVYYRFRHMVGKPSYSEKPARLRMNRLVKPAASKLDFELFALAVSAVNGCETCVRSHEQVVVGGGVSEDQVHDAVRIAAVVHAAAVALELAGHAAAPSAAAAAG.

The active-site Proton donor is C132. The cysteines at positions 132 and 135 are disulfide-linked. The active-site Cysteine sulfenic acid (-SOH) intermediate is C135.

The protein belongs to the AhpD family.

The catalysed reaction is N(6)-[(R)-dihydrolipoyl]-L-lysyl-[lipoyl-carrier protein] + a hydroperoxide = N(6)-[(R)-lipoyl]-L-lysyl-[lipoyl-carrier protein] + an alcohol + H2O. Antioxidant protein with alkyl hydroperoxidase activity. Required for the reduction of the AhpC active site cysteine residues and for the regeneration of the AhpC enzyme activity. In Anaeromyxobacter dehalogenans (strain 2CP-C), this protein is Alkyl hydroperoxide reductase AhpD.